A 692-amino-acid chain; its full sequence is MARQFPLEKTRNIGIMAHIDAGKTTTTERILFYTGRVHKIGEVHDGAATMDWMVQEQERGITITSAATTAQWKGHRINIIDTPGHVDFTVEVERSLRVLDGAVAVFCSVGGVEPQSETVWRQADKYGVPRIAYINKMDRMGADFFRGVSMIADRLGANPVPIQIPIGAEDQFKGIIDLVTMKAMIYTDDLGTTSDVADIPGDLVDQANEYREKLLEAVADTDEELMMKYLEGEELTEEEIRNGIRKGTIGLKFIPVVCGSSFKNKGVQPLLDAVVEYMPAPTDVPNIKGVHPETGEADERHSSDKDPFSALAFKIMADPYVGKLAFFRVYSGVLGSGSYVYNSTKGKRERIGRILQMHANHREEIPEVYAGDIAAAVGLKDTTTGDTLCDDKAPIILESMQFPDPVINVAIEPKTKQDQEKMGTALARLAEEDPTFKMHTDQDSGQTIIEGMGELHLEIIVDRLQREFKVECNVGRPQVAYKETIRRAVKSEGKFVRQSGGRGQYGHCWIEIEPLEQGSGFEFVNKIVGGVIPREYIAPIGQGIEEAMQNGIQAGYPVMDIRATVYDGSYHDVDSSEMAFKIAGSMAFKAGAAKADPAIIEPVMKVEVTVPEEYMGEVIGDMNSRRGRIEGMEATGTAQIVRGFVPLSEMFGYATDLRSKTQGRGVYVMMFDHYEEVPKNIAEGIVAKRAGA.

The 275-residue stretch at 8-282 folds into the tr-type G domain; sequence EKTRNIGIMA…AVVEYMPAPT (275 aa). Residues 17-24, 81-85, and 135-138 contribute to the GTP site; these read AHIDAGKT, DTPGH, and NKMD. A disordered region spans residues 285–304; that stretch reads PNIKGVHPETGEADERHSSD. The span at 290-304 shows a compositional bias: basic and acidic residues; it reads VHPETGEADERHSSD.

Belongs to the TRAFAC class translation factor GTPase superfamily. Classic translation factor GTPase family. EF-G/EF-2 subfamily.

It is found in the cytoplasm. Functionally, catalyzes the GTP-dependent ribosomal translocation step during translation elongation. During this step, the ribosome changes from the pre-translocational (PRE) to the post-translocational (POST) state as the newly formed A-site-bound peptidyl-tRNA and P-site-bound deacylated tRNA move to the P and E sites, respectively. Catalyzes the coordinated movement of the two tRNA molecules, the mRNA and conformational changes in the ribosome. This Desulfitobacterium hafniense (strain DSM 10664 / DCB-2) protein is Elongation factor G.